The primary structure comprises 89 residues: MSVTAERKAEIIKANATKAGDTGSPEVQVAILSERINNLTSHFKTHGKDNHSRRGLLKLVSTRRSLLDYLKKNDEARYKALLEKHNIRR.

Belongs to the universal ribosomal protein uS15 family. Part of the 30S ribosomal subunit. Forms a bridge to the 50S subunit in the 70S ribosome, contacting the 23S rRNA.

In terms of biological role, one of the primary rRNA binding proteins, it binds directly to 16S rRNA where it helps nucleate assembly of the platform of the 30S subunit by binding and bridging several RNA helices of the 16S rRNA. Functionally, forms an intersubunit bridge (bridge B4) with the 23S rRNA of the 50S subunit in the ribosome. This is Small ribosomal subunit protein uS15 from Bradyrhizobium sp. (strain BTAi1 / ATCC BAA-1182).